The chain runs to 903 residues: MVSLGGFARKLFGSANDRRVRGYKGRVDAINALEAEMKALSDEALAAKTAEFRREIADGKSLDDILVPAFAVVREAARRVLGLRPFDVQLIGGMILHERAIAEMKTGEGKTLVATLPVYLNALAGKGVHVVTVNDYLAQRDAGMMGRIYGFLGMSTGVIVHGLSDEQRRDAYACDVTYATNNELGFDYLRDNMKYERSQMVQRGHFFAIVDEVDSILVDEARTPLIISGPLDDRSDLYNTINEFIPRLSPEDYEIDEKQRSANFSEDGTEKLENMLREAGLLKGESLYDIENVAIVHHVNNALKAHKLFTRDKDYIVRNGEIVIIDEFTGRMMPGRRYSEGQHQALEAKEKVQIQPENQTLASITFQNYFRMYDKLAGMTGTAATEAEEFGNIYGLEVLEVPTNLPIKRIDEDDEVYRTVGEKFKAIIEEIKSAHERGQPMLVGTTSIEKSELLAEMLKKDGFSKFQVLNARYHEQEAFIVAQAGVPGAITIATNMAGRGTDIQLGGNPDMRIQQELSDVEPGAERESREKAIREEVQVLKEKALAAGGLYVLATERHESRRIDNQLRGRSGRQGDPGRSKFYLSLQDDLMRIFGSDRMDGMLQKLGLKEGEAIVHPWINKALERAQKKVEARNFDIRKNLLKYDDVLNDQRKVIFEQRIELMDAESVTDTVTDMRNEVIEEVVAKRIPERAYAEKWDAEGLKADVQQYLNLDLPIVEWVAEEGIAEDDIRERITAAADQAAADRAERFGPEVMQYVERSVILQTLDHLWREHIVNLDHLRSVIGFRGYAQRDPLQEYKSEAFELFQALLGNLRQAVTAQLMRVELVREAPEEPQPLPPMQAHHIDPLTGEDDFAPAGDTLLAVAPTTRDPADPSTWGKVSRNEACPCGSGKKYKHCHGVYEA.

ATP contacts are provided by residues Gln-89, 107 to 111 (GEGKT), and Asp-502. Cys-886, Cys-888, Cys-897, and His-898 together coordinate Zn(2+).

This sequence belongs to the SecA family. As to quaternary structure, monomer and homodimer. Part of the essential Sec protein translocation apparatus which comprises SecA, SecYEG and auxiliary proteins SecDF-YajC and YidC. Requires Zn(2+) as cofactor.

The protein localises to the cell inner membrane. Its subcellular location is the cytoplasm. It catalyses the reaction ATP + H2O + cellular proteinSide 1 = ADP + phosphate + cellular proteinSide 2.. Its function is as follows. Part of the Sec protein translocase complex. Interacts with the SecYEG preprotein conducting channel. Has a central role in coupling the hydrolysis of ATP to the transfer of proteins into and across the cell membrane, serving both as a receptor for the preprotein-SecB complex and as an ATP-driven molecular motor driving the stepwise translocation of polypeptide chains across the membrane. The chain is Protein translocase subunit SecA from Sinorhizobium medicae (strain WSM419) (Ensifer medicae).